Reading from the N-terminus, the 508-residue chain is ATP synthase subunit alpha, chloroplastic (508 aa).

171–178 (GDRQTGKT) is a binding site for ATP.

The protein belongs to the ATPase alpha/beta chains family. F-type ATPases have 2 components, CF(1) - the catalytic core - and CF(0) - the membrane proton channel. CF(1) has five subunits: alpha(3), beta(3), gamma(1), delta(1), epsilon(1). CF(0) has four main subunits: a, b, b' and c.

It localises to the plastid. The protein localises to the chloroplast thylakoid membrane. It carries out the reaction ATP + H2O + 4 H(+)(in) = ADP + phosphate + 5 H(+)(out). Functionally, produces ATP from ADP in the presence of a proton gradient across the membrane. The alpha chain is a regulatory subunit. The polypeptide is ATP synthase subunit alpha, chloroplastic (Gnetum parvifolium (Small-leaved jointfir)).